The primary structure comprises 887 residues: Pyruvate, phosphate dikinase 2 (887 aa).

Residue threonine 467 is modified to Phosphothreonine; by PDRP1. The active-site Tele-phosphohistidine intermediate is the histidine 469. Substrate-binding residues include arginine 575, arginine 632, glutamate 761, glycine 782, threonine 783, asparagine 784, and aspartate 785. Glutamate 761 is a binding site for Mg(2+). Aspartate 785 is a Mg(2+) binding site. The active-site Proton donor is the cysteine 847.

The protein belongs to the PEP-utilizing enzyme family. Requires Mg(2+) as cofactor.

It is found in the cytoplasm. It catalyses the reaction pyruvate + phosphate + ATP = phosphoenolpyruvate + AMP + diphosphate + H(+). Functionally, formation of phosphoenolpyruvate. The chain is Pyruvate, phosphate dikinase 2 (PPDK2) from Oryza sativa subsp. japonica (Rice).